Reading from the N-terminus, the 107-residue chain is UPF0122 protein STH1464 (107 aa).

The protein belongs to the UPF0122 family.

In terms of biological role, might take part in the signal recognition particle (SRP) pathway. This is inferred from the conservation of its genetic proximity to ftsY/ffh. May be a regulatory protein. The chain is UPF0122 protein STH1464 from Symbiobacterium thermophilum (strain DSM 24528 / JCM 14929 / IAM 14863 / T).